A 701-amino-acid polypeptide reads, in one-letter code: Arachidonate 12-lipoxygenase, 12R-type (701 aa).

Residues A2–K119 enclose the PLAT domain. Positions T120–I701 constitute a Lipoxygenase domain. Residues H398, H403, H578, N582, and I701 each contribute to the Fe cation site.

It belongs to the lipoxygenase family. It depends on Fe cation as a cofactor.

Its subcellular location is the cytoplasm. It localises to the perinuclear region. It catalyses the reaction (5Z,8Z,11Z,14Z)-eicosatetraenoate + O2 = (12R)-hydroperoxy-(5Z,8Z,10E,14Z)-eicosatetraenoate. The catalysed reaction is N-[omega-(9Z,12Z)-octadecadienoyloxy]acyl-beta-D-glucosyl-(1&lt;-&gt;1)-octadecasphing-4E-enine + O2 = N-[omega-(9R)-hydroperoxy-(10E,12Z)-octadecadienoyloxy]acyl-beta-D-glucosyl-(1&lt;-&gt;1)-octadecasphing-4E-enine. It carries out the reaction a N-[omega-(9Z,12Z)-octadecadienoyloxy]-acylsphin-4E-enine + O2 = a N-[omega-(9R)-hydroperoxy-(10E,12Z)-octadecadienoyloxy]-acylsphin-4E-enine. The enzyme catalyses (6Z,9Z,12Z)-octadecatrienoate + O2 = 10-hydroperoxy-(6Z,8E,12Z)-octadecatrienoate. It catalyses the reaction (4Z,7Z,10Z,13Z,16Z,19Z)-docosahexaenoate + O2 = 14-hydroperoxy-(4Z,7Z,10Z,12E,16Z,19Z)-docosahexaenoate. The catalysed reaction is (8Z,11Z,14Z)-eicosatrienoate + O2 = (8Z,10E,14Z)-12-hydroperoxyeicosatrienoate. It carries out the reaction (5Z,8Z,11Z,14Z,17Z)-eicosapentaenoate + O2 = (5Z,7Z,8Z,10E,14Z,17Z)-12-hydroperoxyeicosapentaenoate. The enzyme catalyses (6Z,9Z,12Z)-octadecatrienoate + O2 = 10R-hydroperoxy-(6Z,8E,12Z)-octadecatrienoate. It catalyses the reaction 1-O-methyl-(5Z,8Z,11Z,14Z)-eicosatetraenoate + O2 = 1-O-methyl (5Z,8Z,10E,12R,14Z)-hydroperoxyiecosatetraenoate. The catalysed reaction is 1-O-methyl-(5Z,8Z,11Z,14Z)-eicosatetraenoate + O2 = 1-O-methyl-8-hydroperoxy-(5Z,9E,11Z,14Z)-eicosatetraenoate. It carries out the reaction 1-O-methyl-(5Z,8Z,11Z,14Z)-eicosatetraenoate + O2 = 1-O-methyl-(8R)-hydroperoxy-(5Z,9E,11Z,14Z)-eicosatrienoate. The enzyme catalyses 1-O-methyl-(9Z,12Z)-octadecadienoate + O2 = 1-O-methyl-(9R)-hydroperoxy-(10E,12Z)-octadecadienoate. It catalyses the reaction 1-O-methyl-20-hydroxy-(5Z,8Z,11Z,14Z)-eicosatetraenoate + O2 = 1-O-methyl-8-hydroperoxy-20-hydroxy-(5Z,9E,11Z,14Z)-eicosatetraenoate. The catalysed reaction is 1-O-methyl-20-hydroxy-(5Z,8Z,11Z,14Z)-eicosatetraenoate + O2 = 1-O-methyl-12-hydroperoxy-20-hydroxy-(5Z,8Z,10E,14Z)-eicosatetraenoate. It carries out the reaction 1-O-methyl-20-hydroxy-(5Z,8Z,11Z,14Z)-eicosatetraenoate + O2 = 1-O-methyl-9-hydroperoxy-20-hydroxy-(5Z,7E,11Z,14Z)-eicosatetraenoate. The enzyme catalyses 1-O-methyl-(9Z,12Z)-octadecadienoate + O2 = 1-O-methyl-(13S)-hydroperoxy-(9Z,11E)-octadecadienoate. The protein operates within lipid metabolism; hydroperoxy eicosatetraenoic acid biosynthesis. It functions in the pathway lipid metabolism; sphingolipid metabolism. Its activity is regulated as follows. Increased by calcium. Catalyzes the regio and stereo-specific incorporation of a single molecule of dioxygen into free and esterified polyunsaturated fatty acids generating lipid hydroperoxides that can be further reduced to the corresponding hydroxy species. In the skin, acts upstream of ALOXE3 on the lineolate moiety of esterified omega-hydroxyacyl-sphingosine (EOS) ceramides to produce an epoxy-ketone derivative, a crucial step in the conjugation of omega-hydroxyceramide to membrane proteins. Therefore plays a crucial role in the synthesis of corneocytes lipid envelope and the establishment of the skin barrier to water loss. May also play a role in the regulation of the expression of airway mucins. The chain is Arachidonate 12-lipoxygenase, 12R-type from Rattus norvegicus (Rat).